Reading from the N-terminus, the 274-residue chain is NH(3)-dependent NAD(+) synthetase (274 aa).

46-53 provides a ligand contact to ATP; it reads GISGGQDS. D52 lines the Mg(2+) pocket. R140 serves as a coordination point for deamido-NAD(+). An ATP-binding site is contributed by T160. A Mg(2+)-binding site is contributed by E165. The deamido-NAD(+) site is built by K173 and D180. ATP is bound by residues K189 and T211. 260–261 contacts deamido-NAD(+); that stretch reads HK.

It belongs to the NAD synthetase family. As to quaternary structure, homodimer.

It catalyses the reaction deamido-NAD(+) + NH4(+) + ATP = AMP + diphosphate + NAD(+) + H(+). Its pathway is cofactor biosynthesis; NAD(+) biosynthesis; NAD(+) from deamido-NAD(+) (ammonia route): step 1/1. Catalyzes the ATP-dependent amidation of deamido-NAD to form NAD. Uses ammonia as a nitrogen source. This is NH(3)-dependent NAD(+) synthetase from Listeria welshimeri serovar 6b (strain ATCC 35897 / DSM 20650 / CCUG 15529 / CIP 8149 / NCTC 11857 / SLCC 5334 / V8).